A 394-amino-acid chain; its full sequence is Venom metalloproteinase antarease-like TtrivMP_A (394 aa).

Residues 1-16 (MISYLASIFLLATVSA) form the signal peptide. Residues 17 to 158 (VPSGRVEVVF…AENVSRMAEE (142 aa)) constitute a propeptide that is removed on maturation. N151 carries N-linked (GlcNAc...) asparagine glycosylation. The Peptidase M12B domain maps to 162 to 390 (IVVEYYIVTD…KPTAFCIFEQ (229 aa)). The cysteines at positions 295 and 386 are disulfide-linked. H319 serves as a coordination point for Zn(2+). E320 is an active-site residue. Residues H323 and H329 each contribute to the Zn(2+) site.

It belongs to the venom metalloproteinase (M12B) family. The cofactor is Zn(2+). As to expression, expressed by the venom gland.

The protein resides in the secreted. With respect to regulation, inhibited by EDTA. In terms of biological role, acts as a metalloprotease. Penetrates intact tissue and specifically cleaves the vesicle-associated membrane protein 2 (VAMP2) (part of the SNARE complex) involved in pancreatic secretion, thus disrupting the normal vesicular traffic. This chain is Venom metalloproteinase antarease-like TtrivMP_A, found in Tityus trivittatus (Argentinean scorpion).